A 409-amino-acid chain; its full sequence is MATMISNLPRDLMEEILSRVPLKSMRAVRLTCKNWHTLSITISESLAKMYISKTTRESREGESTIITLMNYKLCLTSLVVDVDPYIEHKGKLTCFNLEHQVKISQVFYYEDDTITTRLVVWNPYWGQTRQIKTRYSHHAFSGRDSTYMFNYSLGYENKNSCRSHKLLRFIDYHWNYRGLHQFFWYEIYDFDSDLWTTLDVTPHWFIVISQSGVSLKGNTYWCARKRSGGYSDHIICFDFTRERFGPLLPLPFSFIDRHHSCVILSCVSEEKLAVLFQYKDHYYKNVVEIWITAKLEAEMVSWSKFLRINTGPIIHTSFFINEEKKVAIGFNDNRKTINIIGEAGYFRELDLGEHAEPYRRRHVFSYVPSSVQIKETAPGNIKKHQSSIETRLFDRNMLRLVAFEKKVSE.

The region spanning 2 to 49 (ATMISNLPRDLMEEILSRVPLKSMRAVRLTCKNWHTLSITISESLAKM) is the F-box domain. Kelch repeat units lie at residues 169–218 (FIDY…LKGN) and 221–266 (WCAR…ILSC).

The sequence is that of F-box/kelch-repeat protein At1g48625 from Arabidopsis thaliana (Mouse-ear cress).